Here is a 63-residue protein sequence, read N- to C-terminus: Large ribosomal subunit protein bL32 (63 aa).

It belongs to the bacterial ribosomal protein bL32 family.

The sequence is that of Large ribosomal subunit protein bL32 (rpmF) from Aquifex aeolicus (strain VF5).